Here is a 117-residue protein sequence, read N- to C-terminus: Immunoglobulin heavy variable 3-74 (117 aa).

The signal sequence occupies residues 1–19 (MEFGLSWVFLVAILKGVQC). Residues 20 to 44 (EVQLVESGGGLVQPGGSLRLSCAAS) form a framework-1 region. Positions 20–117 (EVQLVESGGG…EDTAVYYCAR (98 aa)) constitute an Ig-like domain. Cysteines 41 and 115 form a disulfide. Residues 45-52 (GFTFSSYW) form a complementarity-determining-1 region. The segment at 53–69 (MHWVRQAPGKGLVWVSR) is framework-2. Residues 70 to 77 (INSDGSST) form a complementarity-determining-2 region. The interval 78–115 (SYADSVKGRFTISRDNAKNTLYLQMNSLRAEDTAVYYC) is framework-3. Positions 116–117 (AR) are complementarity-determining-3.

In terms of assembly, immunoglobulins are composed of two identical heavy chains and two identical light chains; disulfide-linked.

The protein resides in the secreted. It localises to the cell membrane. In terms of biological role, v region of the variable domain of immunoglobulin heavy chains that participates in the antigen recognition. Immunoglobulins, also known as antibodies, are membrane-bound or secreted glycoproteins produced by B lymphocytes. In the recognition phase of humoral immunity, the membrane-bound immunoglobulins serve as receptors which, upon binding of a specific antigen, trigger the clonal expansion and differentiation of B lymphocytes into immunoglobulins-secreting plasma cells. Secreted immunoglobulins mediate the effector phase of humoral immunity, which results in the elimination of bound antigens. The antigen binding site is formed by the variable domain of one heavy chain, together with that of its associated light chain. Thus, each immunoglobulin has two antigen binding sites with remarkable affinity for a particular antigen. The variable domains are assembled by a process called V-(D)-J rearrangement and can then be subjected to somatic hypermutations which, after exposure to antigen and selection, allow affinity maturation for a particular antigen. The protein is Immunoglobulin heavy variable 3-74 of Homo sapiens (Human).